The primary structure comprises 423 residues: Protein CLP1 homolog (423 aa).

ATP contacts are provided by residues E19, K60, and 122–127; that span reads DVGKTT.

It belongs to the Clp1 family. Clp1 subfamily.

The protein resides in the nucleus. Functionally, required for endonucleolytic cleavage during polyadenylation-dependent pre-mRNA 3'-end formation. The polypeptide is Protein CLP1 homolog (cbc) (Culex quinquefasciatus (Southern house mosquito)).